A 444-amino-acid chain; its full sequence is Phosphoglucosamine mutase (444 aa).

The active-site Phosphoserine intermediate is Ser102. Residues Ser102, Asp239, Asp241, and Asp243 each contribute to the Mg(2+) site. Phosphoserine is present on Ser102.

It belongs to the phosphohexose mutase family. Mg(2+) is required as a cofactor. Post-translationally, activated by phosphorylation.

It carries out the reaction alpha-D-glucosamine 1-phosphate = D-glucosamine 6-phosphate. Functionally, catalyzes the conversion of glucosamine-6-phosphate to glucosamine-1-phosphate. The sequence is that of Phosphoglucosamine mutase from Saccharopolyspora erythraea (strain ATCC 11635 / DSM 40517 / JCM 4748 / NBRC 13426 / NCIMB 8594 / NRRL 2338).